A 636-amino-acid chain; its full sequence is Epsin-3 (636 aa).

6 residues coordinate a 1,2-diacyl-sn-glycero-3-phospho-(1D-myo-inositol-4,5-bisphosphate): Arg-8, Lys-11, Arg-25, Asn-30, Arg-63, and His-73. The ENTH domain occupies 12 to 144; it reads NIVHNYSEAE…KDEERLRQER (133 aa). A disordered region spans residues 153–503; the sequence is RMALEGMGIG…TPESFLGPSA (351 aa). Over residues 174–189 the composition is skewed to low complexity; the sequence is GSPSSYTSASSSPRYA. Ser-184 and Ser-185 each carry phosphoserine. 2 consecutive UIM domains span residues 202 to 221 and 229 to 248; these read EEELQLQLALAMSREEAERP and DEDLQLQLALSLSRQEHEKG. 2 stretches are compositionally biased toward basic and acidic residues: residues 214–231 and 242–256; these read SREEAERPVPPASHRDED and RQEHEKGVRSWKGDD. Phosphoserine is present on Ser-257. Basic and acidic residues predominate over residues 270–288; that stretch reads RQRDREPEREERKEEEKLK. Tandem repeats lie at residues 315 to 317, 338 to 340, 365 to 367, 381 to 383, and 398 to 400. The tract at residues 315–400 is 5 X 3 AA repeats of [DE]-P-W; that stretch reads DPWDIPGLRP…KLPSTGADPW (86 aa). Positions 426 to 435 are enriched in basic and acidic residues; that stretch reads ESTEPKESRD. 2 consecutive repeat copies span residues 523 to 525 and 536 to 538. A 3 X 3 AA repeats of N-P-F region spans residues 523 to 635; the sequence is NPFLTGLGVP…LPPQAGTNPF (113 aa). The segment covering 607-616 has biased composition (pro residues); sequence PPPASLPQPL. The disordered stretch occupies residues 607–636; that stretch reads PPPASLPQPLLPTSGPMGPLPPQAGTNPFL. Residues 633–635 form repeat 3; it reads NPF.

Belongs to the epsin family.

The protein localises to the cytoplasm. It is found in the cell cortex. It localises to the perinuclear region. Its subcellular location is the cytoplasmic vesicle. The protein resides in the clathrin-coated vesicle. The chain is Epsin-3 (Epn3) from Mus musculus (Mouse).